The primary structure comprises 171 residues: Ribosome maturation factor RimM (171 aa).

A PRC barrel domain is found at asparagine 94–glycine 168.

It belongs to the RimM family. In terms of assembly, binds ribosomal protein uS19.

Its subcellular location is the cytoplasm. In terms of biological role, an accessory protein needed during the final step in the assembly of 30S ribosomal subunit, possibly for assembly of the head region. Essential for efficient processing of 16S rRNA. May be needed both before and after RbfA during the maturation of 16S rRNA. It has affinity for free ribosomal 30S subunits but not for 70S ribosomes. This chain is Ribosome maturation factor RimM, found in Anaplasma phagocytophilum (strain HZ).